A 402-amino-acid chain; its full sequence is Type II NADH:quinone oxidoreductase (402 aa).

FAD contacts are provided by residues 12 to 16 (GAGYA), 39 to 40 (NK), and Val-83. Residue Glu-172 is part of the active site. FAD is bound by residues Asp-302, 319-320 (AQ), and Lys-379.

Belongs to the NADH dehydrogenase family. FAD is required as a cofactor.

Its subcellular location is the cell membrane. It carries out the reaction a quinone + NADH + H(+) = a quinol + NAD(+). Its function is as follows. Alternative, nonproton pumping NADH:quinone oxidoreductase that delivers electrons to the respiratory chain by oxidation of NADH and reduction of quinones, and contributes to the regeneration of NAD(+). In Staphylococcus aureus (strain bovine RF122 / ET3-1), this protein is Type II NADH:quinone oxidoreductase.